The primary structure comprises 504 residues: Probable cytochrome P450 6a21 (504 aa).

Cysteine 449 provides a ligand contact to heme.

The protein belongs to the cytochrome P450 family. The cofactor is heme.

It localises to the endoplasmic reticulum membrane. It is found in the microsome membrane. In terms of biological role, may be involved in the metabolism of insect hormones and in the breakdown of synthetic insecticides. This Drosophila melanogaster (Fruit fly) protein is Probable cytochrome P450 6a21 (Cyp6a21).